The primary structure comprises 436 residues: Transcriptional regulator dmxR14 (436 aa).

Over residues 1–27 (MEEAETNTQVDSVPSNSVRSGAELSSK) the composition is skewed to polar residues. The disordered stretch occupies residues 1-32 (MEEAETNTQVDSVPSNSVRSGAELSSKSKLRD). Residues 34–61 (CHACARSKVRCPKQKPSCSRCEARGTTC) constitute a DNA-binding region (zn(2)-C6 fungal-type). Residues 67–136 (RRPGRRRETS…ITTVHNGPEN (70 aa)) form a disordered region. Residues 90-136 (SHANNRNSPSFSSTRSTLPSPIASDSNSNFTQPQNSSITTVHNGPEN) are compositionally biased toward polar residues.

The protein localises to the nucleus. Its function is as follows. Transcriptional regulator; part of the gene cluster that mediates the biosynthesis of the dimeric xanthones cryptosporioptides. This Cryptosporiopsis sp. (strain 8999) protein is Transcriptional regulator dmxR14.